Reading from the N-terminus, the 363-residue chain is Flagellar P-ring protein (363 aa).

An N-terminal signal peptide occupies residues 1-20; the sequence is MKKFTLLLLCFVLPMTSAYA.

It belongs to the FlgI family. In terms of assembly, the basal body constitutes a major portion of the flagellar organelle and consists of four rings (L,P,S, and M) mounted on a central rod.

Its subcellular location is the periplasm. The protein resides in the bacterial flagellum basal body. Assembles around the rod to form the L-ring and probably protects the motor/basal body from shearing forces during rotation. This is Flagellar P-ring protein from Vibrio vulnificus (strain YJ016).